Reading from the N-terminus, the 285-residue chain is Malectin (285 aa).

Residues 1-26 (MRRVTLHCAARLVIAALWLLVEVCRA) form the signal peptide. Residues 27–262 (ESGAQSLAER…TPNPYATDNS (236 aa)) are Lumenal-facing. The a carbohydrate site is built by tyrosine 71, tyrosine 93, tyrosine 120, phenylalanine 121, and aspartate 190. Residues 209-258 (KLQPHPGLEKREEEEEEEEEGEGPEGEKKSASTSPKNPVRSGPRTPNPYA) form a disordered region. Residues 220 to 232 (EEEEEEEEEGEGP) show a composition bias toward acidic residues. N-linked (GlcNAc...) asparagine glycosylation occurs at asparagine 261. The chain crosses the membrane as a helical span at residues 263–283 (SLMFPILVAFGVFIPTLFCLC). Over 284–285 (RL) the chain is Cytoplasmic.

This sequence belongs to the malectin family.

It localises to the endoplasmic reticulum membrane. Functionally, carbohydrate-binding protein with a strong ligand preference for Glc2-N-glycan. May play a role in the early steps of protein N-glycosylation. The chain is Malectin from Danio rerio (Zebrafish).